The chain runs to 180 residues: Adenine phosphoribosyltransferase (180 aa).

Belongs to the purine/pyrimidine phosphoribosyltransferase family. In terms of assembly, homodimer.

It localises to the cytoplasm. The catalysed reaction is AMP + diphosphate = 5-phospho-alpha-D-ribose 1-diphosphate + adenine. It participates in purine metabolism; AMP biosynthesis via salvage pathway; AMP from adenine: step 1/1. Catalyzes a salvage reaction resulting in the formation of AMP, that is energically less costly than de novo synthesis. This chain is Adenine phosphoribosyltransferase, found in Mannheimia succiniciproducens (strain KCTC 0769BP / MBEL55E).